The following is a 2723-amino-acid chain: Zinc finger protein 292 (2723 aa).

A C2H2-type 1 zinc finger spans residues tyrosine 569–histidine 591. Positions arginine 608–arginine 633 are disordered. Polar residues predominate over residues isoleucine 615 to lysine 629. Phosphoserine is present on serine 654. 5 C2H2-type zinc fingers span residues phenylalanine 681–histidine 705, valine 722–histidine 744, tyrosine 750–histidine 774, alanine 779–histidine 803, and tyrosine 807–histidine 831. Basic and acidic residues predominate over residues glutamate 825–proline 834. Residues glutamate 825–asparagine 860 are disordered. The span at glutamine 844–asparagine 860 shows a compositional bias: polar residues. The C2H2-type 7 zinc finger occupies phenylalanine 1098–histidine 1123. The residue at position 1117 (lysine 1117) is an N6-acetyllysine. Serine 1159 bears the Phosphoserine mark. The tract at residues serine 1331 to alanine 1364 is disordered. Residues glutamate 1341–glutamate 1355 show a composition bias toward basic and acidic residues. The C2H2-type 8; degenerate zinc finger occupies phenylalanine 1375–arginine 1397. The span at serine 1588–alanine 1627 shows a compositional bias: polar residues. The interval serine 1588–valine 1634 is disordered. A coiled-coil region spans residues glutamine 1827 to serine 1854. 2 consecutive C2H2-type zinc fingers follow at residues phenylalanine 1902–histidine 1927 and phenylalanine 1947–histidine 1972. Residues arginine 1986–leucine 2023 form a disordered region. A compositionally biased stretch (polar residues) spans serine 1994–lysine 2006. An N6-acetyllysine modification is found at lysine 2042. Residues asparagine 2074–glutamate 2103 are disordered. The span at lysine 2078 to proline 2097 shows a compositional bias: basic residues. C2H2-type zinc fingers lie at residues tyrosine 2114–histidine 2139, phenylalanine 2172–histidine 2197, phenylalanine 2216–histidine 2241, and tyrosine 2256–histidine 2281. Basic residues-rich tracts occupy residues histidine 2285–arginine 2294 and lysine 2312–arginine 2322. Positions histidine 2285–asparagine 2345 are disordered. Residues tyrosine 2386–histidine 2410 form a C2H2-type 15 zinc finger. A compositionally biased stretch (basic and acidic residues) spans glutamine 2441–aspartate 2452. Disordered regions lie at residues glutamine 2441–glutamate 2480, leucine 2530–glutamate 2564, and glutamine 2606–isoleucine 2631. Over residues threonine 2453 to glutamine 2470 the composition is skewed to polar residues. Over residues glutamine 2606–proline 2615 the composition is skewed to basic and acidic residues.

The protein belongs to the krueppel C2H2-type zinc-finger protein family.

The protein localises to the nucleus. In terms of biological role, may be involved in transcriptional regulation. The polypeptide is Zinc finger protein 292 (ZNF292) (Homo sapiens (Human)).